The chain runs to 134 residues: uncharacterized protein (134 aa).

Positions 1–26 (MRLYKAMALCLPLVVICTSEVSQSTA) are cleaved as a signal peptide. The tract at residues 77–98 (GEKNEEVAGPVDGEGSEEEAFD) is disordered.

This is an uncharacterized protein from Encephalitozoon cuniculi (strain GB-M1) (Microsporidian parasite).